The chain runs to 317 residues: Dehydrogenase/reductase SDR family member 12 (317 aa).

NAD(+) is bound by residues Ser-50 and Ile-52. Ser-175 provides a ligand contact to substrate. NAD(+) contacts are provided by Tyr-201, Lys-205, and Thr-234. Catalysis depends on Tyr-201, which acts as the Proton acceptor.

It belongs to the short-chain dehydrogenases/reductases (SDR) family.

Functionally, putative oxidoreductase. This is Dehydrogenase/reductase SDR family member 12 from Homo sapiens (Human).